Consider the following 2543-residue polypeptide: Polyketide synthase PksR (2543 aa).

Residues 165–269 (LEIGAGTGGT…KAVLKKNGLL (105 aa)) are methyltransferase. In terms of domain architecture, Carrier 1 spans 376–452 (SLIEQTAQFV…ELVEYLVKGH (77 aa)). Residue Ser-413 is modified to O-(pantetheine 4'-phosphoryl)serine. The segment at 465 to 485 (TKPAKNEAPLQTERTDPNKPF) is disordered. In terms of domain architecture, Ketosynthase family 3 (KS3) 1 spans 527–959 (TEDIAIIGVS…GAYANLIIEE (433 aa)). Cys-700 (for beta-ketoacyl synthase 1 activity) is an active-site residue. Residues 1114 to 1242 (HFDVSSINEK…GQCGIGSFEP (129 aa)) form an N-terminal hotdog fold region. Residues 1114–1397 (HFDVSSINEK…LKQLRISNQR (284 aa)) form the PKS/mFAS DH domain. Residues 1255–1397 (TKLHHIDQMY…LKQLRISNQR (143 aa)) form a C-terminal hotdog fold region. The Carrier 2 domain maps to 1407–1485 (SNLKARIRSY…ELIDFFADKH (79 aa)). An O-(pantetheine 4'-phosphoryl)serine modification is found at Ser-1445. In terms of domain architecture, Ketosynthase family 3 (KS3) 2 spans 1528-1946 (ADGIAIIGMS…GVNAHVILEE (419 aa)). Catalysis depends on for beta-ketoacyl synthase 2 activity residues Cys-1680, His-1815, and His-1862. A Carrier 3 domain is found at 2134–2208 (RINNSSDHHI…DMMDLIAKKQ (75 aa)). O-(pantetheine 4'-phosphoryl)serine is present on Ser-2168. The tract at residues 2234–2514 (RPVFWFHGGV…EFCEKLYSNR (281 aa)) is thioesterase.

It depends on pantetheine 4'-phosphate as a cofactor.

The protein localises to the cytoplasm. Its pathway is antibiotic biosynthesis; bacillaene biosynthesis. Its function is as follows. Involved in some intermediate steps for the synthesis of the antibiotic polyketide bacillaene which is involved in secondary metabolism. In Bacillus subtilis (strain 168), this protein is Polyketide synthase PksR (pksR).